Here is a 118-residue protein sequence, read N- to C-terminus: uncharacterized protein (118 aa).

Transmembrane regions (helical) follow at residues 5–20 (IVFY…SVVM), 25–42 (VIRT…LLYF), 53–73 (ALAI…FIIL), and 83–103 (LFFT…SLSI).

The protein resides in the cell membrane. This is an uncharacterized protein from Bacillus subtilis (strain 168).